We begin with the raw amino-acid sequence, 316 residues long: Methionyl-tRNA formyltransferase (316 aa).

A (6S)-5,6,7,8-tetrahydrofolate-binding site is contributed by 112–115 (SLLP).

This sequence belongs to the Fmt family.

It carries out the reaction L-methionyl-tRNA(fMet) + (6R)-10-formyltetrahydrofolate = N-formyl-L-methionyl-tRNA(fMet) + (6S)-5,6,7,8-tetrahydrofolate + H(+). Functionally, attaches a formyl group to the free amino group of methionyl-tRNA(fMet). The formyl group appears to play a dual role in the initiator identity of N-formylmethionyl-tRNA by promoting its recognition by IF2 and preventing the misappropriation of this tRNA by the elongation apparatus. This is Methionyl-tRNA formyltransferase from Psychromonas ingrahamii (strain DSM 17664 / CCUG 51855 / 37).